Reading from the N-terminus, the 554-residue chain is Formate--tetrahydrofolate ligase (554 aa).

64–71 (TPAGEGKS) lines the ATP pocket.

This sequence belongs to the formate--tetrahydrofolate ligase family.

The enzyme catalyses (6S)-5,6,7,8-tetrahydrofolate + formate + ATP = (6R)-10-formyltetrahydrofolate + ADP + phosphate. It participates in one-carbon metabolism; tetrahydrofolate interconversion. This chain is Formate--tetrahydrofolate ligase, found in Leuconostoc citreum (strain KM20).